The following is a 253-amino-acid chain: 5'/3'-nucleotidase SurE (253 aa).

Residues aspartate 8, aspartate 9, serine 39, and asparagine 92 each coordinate a divalent metal cation.

It belongs to the SurE nucleotidase family. Requires a divalent metal cation as cofactor.

It is found in the cytoplasm. The catalysed reaction is a ribonucleoside 5'-phosphate + H2O = a ribonucleoside + phosphate. The enzyme catalyses a ribonucleoside 3'-phosphate + H2O = a ribonucleoside + phosphate. It carries out the reaction [phosphate](n) + H2O = [phosphate](n-1) + phosphate + H(+). In terms of biological role, nucleotidase with a broad substrate specificity as it can dephosphorylate various ribo- and deoxyribonucleoside 5'-monophosphates and ribonucleoside 3'-monophosphates with highest affinity to 3'-AMP. Also hydrolyzes polyphosphate (exopolyphosphatase activity) with the preference for short-chain-length substrates (P20-25). Might be involved in the regulation of dNTP and NTP pools, and in the turnover of 3'-mononucleotides produced by numerous intracellular RNases (T1, T2, and F) during the degradation of various RNAs. In Shigella dysenteriae serotype 1 (strain Sd197), this protein is 5'/3'-nucleotidase SurE.